The following is a 210-amino-acid chain: 3-hexulose-6-phosphate synthase 3 (210 aa).

Belongs to the HPS/KGPDC family. HPS subfamily.

It catalyses the reaction D-ribulose 5-phosphate + formaldehyde = D-arabino-hex-3-ulose 6-phosphate. It functions in the pathway one-carbon metabolism; formaldehyde assimilation via RuMP pathway; D-fructose 6-phosphate from D-ribulose 5-phosphate and formaldehyde: step 1/2. Its function is as follows. Catalyzes the condensation of ribulose 5-phosphate with formaldehyde to form 3-hexulose 6-phosphate. The protein is 3-hexulose-6-phosphate synthase 3 of Staphylococcus saprophyticus subsp. saprophyticus (strain ATCC 15305 / DSM 20229 / NCIMB 8711 / NCTC 7292 / S-41).